Reading from the N-terminus, the 362-residue chain is D-alanine--D-alanine ligase (362 aa).

In terms of domain architecture, ATP-grasp spans 141-346 (KNIFAEAGLN…YPELIEELIR (206 aa)). ATP is bound at residue 174 to 229 (EEALGYPCFVKPANLGSSVGINKCKDREELEKAFEEAFQFDRKIIVEENIIGREVE). 3 residues coordinate Mg(2+): aspartate 300, glutamate 313, and asparagine 315.

Belongs to the D-alanine--D-alanine ligase family. Requires Mg(2+) as cofactor. Mn(2+) serves as cofactor.

The protein resides in the cytoplasm. The catalysed reaction is 2 D-alanine + ATP = D-alanyl-D-alanine + ADP + phosphate + H(+). The protein operates within cell wall biogenesis; peptidoglycan biosynthesis. In terms of biological role, cell wall formation. This Bacillus cytotoxicus (strain DSM 22905 / CIP 110041 / 391-98 / NVH 391-98) protein is D-alanine--D-alanine ligase.